A 185-amino-acid chain; its full sequence is Der GTPase-activating protein YihI (185 aa).

Disordered regions lie at residues 1–74 (MGRS…KKKI) and 145–169 (EPED…SSDE). The span at 23-33 (NRSESDVEGRE) shows a compositional bias: basic and acidic residues. Residues 34 to 47 (RKRVKKRKGLKSGS) show a composition bias toward basic residues. Positions 48 to 68 (RHSDGSEAKQRKAALARDPRL) are enriched in basic and acidic residues. Positions 145 to 155 (EPEDDEEEIFE) are enriched in acidic residues.

This sequence belongs to the YihI family. As to quaternary structure, interacts with Der.

A GTPase-activating protein (GAP) that modifies Der/EngA GTPase function. May play a role in ribosome biogenesis. The protein is Der GTPase-activating protein YihI of Vibrio atlanticus (strain LGP32) (Vibrio splendidus (strain Mel32)).